The sequence spans 98 residues: uncharacterized protein (98 aa).

The region spanning 37–91 is the HTH cro/C1-type domain; it reads LITSRQQLGISQKQLETLSGVKQPMIARIEKGQTNPQLETLLKLLAPLGKTLSIV. A DNA-binding region (H-T-H motif) is located at residues 48 to 67; sequence QKQLETLSGVKQPMIARIEK.

This is an uncharacterized protein from Haemophilus influenzae (strain ATCC 51907 / DSM 11121 / KW20 / Rd).